Here is a 194-residue protein sequence, read N- to C-terminus: Imidazoleglycerol-phosphate dehydratase (194 aa).

Belongs to the imidazoleglycerol-phosphate dehydratase family.

It is found in the cytoplasm. The catalysed reaction is D-erythro-1-(imidazol-4-yl)glycerol 3-phosphate = 3-(imidazol-4-yl)-2-oxopropyl phosphate + H2O. The protein operates within amino-acid biosynthesis; L-histidine biosynthesis; L-histidine from 5-phospho-alpha-D-ribose 1-diphosphate: step 6/9. The polypeptide is Imidazoleglycerol-phosphate dehydratase (Listeria monocytogenes serotype 4a (strain HCC23)).